A 429-amino-acid polypeptide reads, in one-letter code: Adenylosuccinate synthetase (429 aa).

Residues 12–18 and 40–42 each bind GTP; these read GDEGKGK and GHT. Catalysis depends on aspartate 13, which acts as the Proton acceptor. Residues aspartate 13 and glycine 40 each coordinate Mg(2+). IMP is bound by residues 13-16, 38-41, threonine 129, arginine 143, glutamine 223, threonine 238, and arginine 302; these read DEGK and NAGH. Catalysis depends on histidine 41, which acts as the Proton donor. Substrate is bound at residue 298–304; that stretch reads VVTGRKR. Residues arginine 304, 330–332, and 412–414 contribute to the GTP site; these read KLD and STS.

It belongs to the adenylosuccinate synthetase family. In terms of assembly, homodimer. Mg(2+) is required as a cofactor.

Its subcellular location is the cytoplasm. It carries out the reaction IMP + L-aspartate + GTP = N(6)-(1,2-dicarboxyethyl)-AMP + GDP + phosphate + 2 H(+). It functions in the pathway purine metabolism; AMP biosynthesis via de novo pathway; AMP from IMP: step 1/2. In terms of biological role, plays an important role in the de novo pathway of purine nucleotide biosynthesis. Catalyzes the first committed step in the biosynthesis of AMP from IMP. This is Adenylosuccinate synthetase from Brucella abortus (strain 2308).